A 411-amino-acid polypeptide reads, in one-letter code: Prophage integrase IntR (411 aa).

In terms of domain architecture, Core-binding (CB) spans 81–176 (KTFGELCDIW…LLCSLLRFAY (96 aa)). A Tyr recombinase domain is found at 197 to 404 (IKPDPLSKTE…IDDMNDEQIA (208 aa)). Residues R231, K266, R358, and H381 contribute to the active site. Y391 serves as the catalytic O-(3'-phospho-DNA)-tyrosine intermediate.

This sequence belongs to the 'phage' integrase family.

Functionally, integrase is necessary for integration of the phage into the host genome by site-specific recombination. In conjunction with excisionase, integrase is also necessary for excision of the prophage from the host genome. This chain is Prophage integrase IntR (intR), found in Escherichia coli (strain K12).